A 436-amino-acid polypeptide reads, in one-letter code: GTPase Der (436 aa).

2 consecutive EngA-type G domains span residues 4–167 (PTIA…PNTS) and 175–351 (IKFS…MNQN). GTP is bound by residues 10 to 17 (GRPNVGKS), 57 to 61 (DTGGI), 119 to 122 (NKVD), 181 to 188 (GRPNVGKS), 229 to 233 (DTAGM), and 294 to 297 (NKWD). Residues 352 to 436 (LRIPSALLND…PIKIIPRRRK (85 aa)) form the KH-like domain.

The protein belongs to the TRAFAC class TrmE-Era-EngA-EngB-Septin-like GTPase superfamily. EngA (Der) GTPase family. As to quaternary structure, associates with the 50S ribosomal subunit.

In terms of biological role, GTPase that plays an essential role in the late steps of ribosome biogenesis. This chain is GTPase Der, found in Enterococcus faecalis (strain ATCC 700802 / V583).